A 747-amino-acid chain; its full sequence is NAD(P)H-quinone oxidoreductase subunit 5, chloroplastic (747 aa).

16 consecutive transmembrane segments (helical) span residues 9–29 (WIIPFTPLPVPILIGVGLLLF), 40–60 (WAFPSIFLLIIVMIFSVDLSI), 89–109 (IDSLTSIMSILITTVGILVLI), 125–145 (FAYLSFFNTSMLGLVTSSNLI), 147–167 (VYIFWELVGMCSYLLIGFWFT), 185–205 (GDFGLLLGILGLYWITGSLEF), 219–239 (NEVNIFFITLCALLLFCGSVA), 258–278 (TPISALIHAATMVAAGIFLVA), 280–300 (LLPFFIAIPSIMNGIAFIGII), 327–347 (LGYMMLALGMGSYRIALFHLI), 354–374 (ALLFLGSGSIIHSMEAIVGYS), 396–416 (TAFLIGTLSLCGIPPFACFWS), 425–445 (WLYSPIFAIIACSTAGLTAFY), 552–572 (LFSMLVLVLFTFFVGAIGISF), 606–626 (FFTNATFSVSIAFFGIFIASF), and 727–747 (YILFFVFFVLLFLIIFYSFFI).

Belongs to the complex I subunit 5 family. As to quaternary structure, NDH is composed of at least 16 different subunits, 5 of which are encoded in the nucleus.

Its subcellular location is the plastid. It localises to the chloroplast thylakoid membrane. It catalyses the reaction a plastoquinone + NADH + (n+1) H(+)(in) = a plastoquinol + NAD(+) + n H(+)(out). It carries out the reaction a plastoquinone + NADPH + (n+1) H(+)(in) = a plastoquinol + NADP(+) + n H(+)(out). Its function is as follows. NDH shuttles electrons from NAD(P)H:plastoquinone, via FMN and iron-sulfur (Fe-S) centers, to quinones in the photosynthetic chain and possibly in a chloroplast respiratory chain. The immediate electron acceptor for the enzyme in this species is believed to be plastoquinone. Couples the redox reaction to proton translocation, and thus conserves the redox energy in a proton gradient. The protein is NAD(P)H-quinone oxidoreductase subunit 5, chloroplastic (ndhF) of Lotus japonicus (Lotus corniculatus var. japonicus).